Reading from the N-terminus, the 417-residue chain is Serine hydroxymethyltransferase (417 aa).

(6S)-5,6,7,8-tetrahydrofolate-binding positions include Leu-120 and 124 to 126 (GHL). Residue Lys-229 is modified to N6-(pyridoxal phosphate)lysine.

This sequence belongs to the SHMT family. As to quaternary structure, homodimer. Requires pyridoxal 5'-phosphate as cofactor.

It localises to the cytoplasm. It carries out the reaction (6R)-5,10-methylene-5,6,7,8-tetrahydrofolate + glycine + H2O = (6S)-5,6,7,8-tetrahydrofolate + L-serine. The protein operates within one-carbon metabolism; tetrahydrofolate interconversion. It functions in the pathway amino-acid biosynthesis; glycine biosynthesis; glycine from L-serine: step 1/1. Its function is as follows. Catalyzes the reversible interconversion of serine and glycine with tetrahydrofolate (THF) serving as the one-carbon carrier. This reaction serves as the major source of one-carbon groups required for the biosynthesis of purines, thymidylate, methionine, and other important biomolecules. Also exhibits THF-independent aldolase activity toward beta-hydroxyamino acids, producing glycine and aldehydes, via a retro-aldol mechanism. This chain is Serine hydroxymethyltransferase, found in Anaeromyxobacter sp. (strain Fw109-5).